The following is a 572-amino-acid chain: DnaJ protein ERDJ3A (572 aa).

The signal sequence occupies residues 1-23 (MVRTRLAISVVLVSTLLLLNVKA). A J domain is found at 27-91 (DPYKVLGVSK…EKRKNYDLYG (65 aa)). Positions 394–423 (ITVKNLKSAVQELGKLLEGLEKKNKKVSSK) form a coiled coil. Residues 419–439 (KVSSKSQAGQAPNESSEKIPL) form a disordered region. Positions 422 to 432 (SKSQAGQAPNE) are enriched in polar residues. N-linked (GlcNAc...) asparagine glycosylation is present at asparagine 431.

As to quaternary structure, interacts with BIP1 and BIP3. The interaction with BIP1 and BIP3 activates the ATPase enzyme activities of BIP1 and BIP3. Not N-glycosylated. Expressed in roots, leaves, stems, flowers, mature pollen grains and growing pollen tubes.

The protein resides in the endoplasmic reticulum lumen. Its function is as follows. Regulates protein folding in the endoplasmic reticulum (ER) lumen. Functions probably as a co-molecular chaperone that is required for normal growth of pollen tubes under high-temperature stress. The protein is DnaJ protein ERDJ3A (ERDJ3A) of Arabidopsis thaliana (Mouse-ear cress).